Consider the following 319-residue polypeptide: Acetyl-coenzyme A carboxylase carboxyl transferase subunit alpha (319 aa).

One can recognise a CoA carboxyltransferase C-terminal domain in the interval 32–293 (NVETEVRALR…KAVLLNELDA (262 aa)).

Belongs to the AccA family. In terms of assembly, acetyl-CoA carboxylase is a heterohexamer composed of biotin carboxyl carrier protein (AccB), biotin carboxylase (AccC) and two subunits each of ACCase subunit alpha (AccA) and ACCase subunit beta (AccD).

It is found in the cytoplasm. The catalysed reaction is N(6)-carboxybiotinyl-L-lysyl-[protein] + acetyl-CoA = N(6)-biotinyl-L-lysyl-[protein] + malonyl-CoA. It functions in the pathway lipid metabolism; malonyl-CoA biosynthesis; malonyl-CoA from acetyl-CoA: step 1/1. In terms of biological role, component of the acetyl coenzyme A carboxylase (ACC) complex. First, biotin carboxylase catalyzes the carboxylation of biotin on its carrier protein (BCCP) and then the CO(2) group is transferred by the carboxyltransferase to acetyl-CoA to form malonyl-CoA. The protein is Acetyl-coenzyme A carboxylase carboxyl transferase subunit alpha of Xanthomonas axonopodis pv. citri (strain 306).